The primary structure comprises 499 residues: MKIALPVFQKFNRLISSCKMSGVFPYNPPVNRQMRELDRSFFITKIPMCAVKFPEPKNISVFSKNFKNCILRVPRIPHVVKLNSSKPKDELTSVQNKKLKTADGNNTPVTKGVLLHESIHSVEDAYGKLPEDALAFLKENSAEIVPHEYVLDYDFWKAEEILRAVLPEQFLEEVPTGFTITGHIAHLNLRTEFKPFDSLIGQVILDKNNKIECVVDKVSSIATQFRTFPMKVIAGKSDSLVVEQKESNCTFKFDFSKVYWNSRLHTEHERLVKQYFQPGQVVCDVFAGVGPFAVPAGKKDVIVLANDLNPESYKYLKENIALNKVAKTVKSFNMDGADFIRQSPQLLQQWIQDEEGGKITIPLPLKKRHRSQQHNDQQPPQPRTKELIIPSHISHYVMNLPDSAISFLGNFRGIFAAHTKGATDTIQMPWVHVHCFEKYPPGDQVTEDELHARVHARIIAALKVTADDLPLNAVSLHLVRKVAPTKPMYCASFQLPANV.

Residues Met1 to Thr44 constitute a mitochondrion transit peptide. Residues His268, Asp307–Leu308, Asp335–Gly336, and Asn399 each bind S-adenosyl-L-methionine.

This sequence belongs to the class I-like SAM-binding methyltransferase superfamily. TRM5/TYW2 family. As to quaternary structure, monomer.

The protein localises to the mitochondrion matrix. The protein resides in the nucleus. It localises to the cytoplasm. It catalyses the reaction guanosine(37) in tRNA + S-adenosyl-L-methionine = N(1)-methylguanosine(37) in tRNA + S-adenosyl-L-homocysteine + H(+). Specifically methylates the N1 position of guanosine-37 in various cytoplasmic and mitochondrial tRNAs. Methylation is not dependent on the nature of the nucleoside 5' of the target nucleoside. This is the first step in the biosynthesis of wybutosine (yW), a modified base adjacent to the anticodon of tRNAs and required for accurate decoding. Postspliced cytoplasmic tRNAs are imported into the nucleus, where this first step seems to take place, after which they are reexported to the cytoplasm, where the yW sythesis is completed by cytoplasmic enzymes. The chain is tRNA (guanine(37)-N(1))-methyltransferase from Saccharomyces cerevisiae (strain ATCC 204508 / S288c) (Baker's yeast).